The following is a 198-amino-acid chain: Holliday junction branch migration complex subunit RuvA (198 aa).

Positions M1–R63 are domain I. Residues T64–P142 are domain II. The flexible linker stretch occupies residues E143 to L153. Residues L153–R198 are domain III.

The protein belongs to the RuvA family. In terms of assembly, homotetramer. Forms an RuvA(8)-RuvB(12)-Holliday junction (HJ) complex. HJ DNA is sandwiched between 2 RuvA tetramers; dsDNA enters through RuvA and exits via RuvB. An RuvB hexamer assembles on each DNA strand where it exits the tetramer. Each RuvB hexamer is contacted by two RuvA subunits (via domain III) on 2 adjacent RuvB subunits; this complex drives branch migration. In the full resolvosome a probable DNA-RuvA(4)-RuvB(12)-RuvC(2) complex forms which resolves the HJ.

Its subcellular location is the cytoplasm. In terms of biological role, the RuvA-RuvB-RuvC complex processes Holliday junction (HJ) DNA during genetic recombination and DNA repair, while the RuvA-RuvB complex plays an important role in the rescue of blocked DNA replication forks via replication fork reversal (RFR). RuvA specifically binds to HJ cruciform DNA, conferring on it an open structure. The RuvB hexamer acts as an ATP-dependent pump, pulling dsDNA into and through the RuvAB complex. HJ branch migration allows RuvC to scan DNA until it finds its consensus sequence, where it cleaves and resolves the cruciform DNA. The sequence is that of Holliday junction branch migration complex subunit RuvA from Pelobacter propionicus (strain DSM 2379 / NBRC 103807 / OttBd1).